Here is a 357-residue protein sequence, read N- to C-terminus: MLIFFNKYLHINLNILSYIPYRAIFSLLTSFFINLYIGPYFIYYFKKLQTYQIIRNNGPKTHYSKKNTPTMGGIFIIFSILFSTILYCNLSNIYIWYVISILIGYGLIGFIDDYKKIKYKNSQGLKLKWKYFFLSIIAFIFICMIKINNKDIISTELIIPFCIKNDFEINYLYIFLSYFVLVGTSNAVNLTDGLDGLAIMPVIFLTCGLTLISLFSDNINISHYLHVQYVKNSTELAILCMAIVGSGLGFLWFNSYPAKVFMGDVGSLALGGSLGAIAILLHQELLLIIMGGIFVFETISVILQIISFKIRKKRIFQMAPVHHHYEVKGILEPLIIVRFWIVSLILLLISLISLKVC.

10 helical membrane passes run 23–43 (AIFS…YFIY), 70–90 (TMGG…YCNL), 91–111 (SNIY…IGFI), 127–147 (LKWK…MIKI), 171–191 (YLYI…VNLT), 196–216 (GLAI…SLFS), 236–256 (LAIL…FNSY), 260–280 (VFMG…IAIL), 286–306 (LLII…LQII), and 334–354 (LIIV…LISL).

Belongs to the glycosyltransferase 4 family. MraY subfamily. Mg(2+) serves as cofactor.

The protein localises to the cell inner membrane. It catalyses the reaction UDP-N-acetyl-alpha-D-muramoyl-L-alanyl-gamma-D-glutamyl-meso-2,6-diaminopimeloyl-D-alanyl-D-alanine + di-trans,octa-cis-undecaprenyl phosphate = di-trans,octa-cis-undecaprenyl diphospho-N-acetyl-alpha-D-muramoyl-L-alanyl-D-glutamyl-meso-2,6-diaminopimeloyl-D-alanyl-D-alanine + UMP. Its pathway is cell wall biogenesis; peptidoglycan biosynthesis. Its function is as follows. Catalyzes the initial step of the lipid cycle reactions in the biosynthesis of the cell wall peptidoglycan: transfers peptidoglycan precursor phospho-MurNAc-pentapeptide from UDP-MurNAc-pentapeptide onto the lipid carrier undecaprenyl phosphate, yielding undecaprenyl-pyrophosphoryl-MurNAc-pentapeptide, known as lipid I. This is Phospho-N-acetylmuramoyl-pentapeptide-transferase from Buchnera aphidicola subsp. Acyrthosiphon pisum (strain APS) (Acyrthosiphon pisum symbiotic bacterium).